The primary structure comprises 365 residues: 2-aminoethylphosphonate--pyruvate transaminase (365 aa).

K194 carries the post-translational modification N6-(pyridoxal phosphate)lysine.

It belongs to the class-V pyridoxal-phosphate-dependent aminotransferase family. PhnW subfamily. In terms of assembly, homodimer. Pyridoxal 5'-phosphate is required as a cofactor.

The catalysed reaction is (2-aminoethyl)phosphonate + pyruvate = phosphonoacetaldehyde + L-alanine. Functionally, involved in phosphonate degradation. The sequence is that of 2-aminoethylphosphonate--pyruvate transaminase from Bacillus thuringiensis (strain Al Hakam).